A 245-amino-acid polypeptide reads, in one-letter code: DNA repair protein RecO (245 aa).

It belongs to the RecO family.

Its function is as follows. Involved in DNA repair and RecF pathway recombination. The polypeptide is DNA repair protein RecO (Porphyromonas gingivalis (strain ATCC BAA-308 / W83)).